We begin with the raw amino-acid sequence, 210 residues long: CASP-like protein 3A1 (210 aa).

At Met-1–Asp-44 the chain is on the cytoplasmic side. Residues Val-45–Met-65 form a helical membrane-spanning segment. Residues Ala-66–Glu-94 are Extracellular-facing. The helical transmembrane segment at Tyr-95–Val-115 threads the bilayer. At Ser-116 to His-130 the chain is on the cytoplasmic side. A helical transmembrane segment spans residues Ala-131–Ala-151. Topologically, residues Ala-152 to Ser-185 are extracellular. Asn-159 carries an N-linked (GlcNAc...) asparagine glycan. The chain crosses the membrane as a helical span at residues Ile-186 to Trp-206. The Cytoplasmic segment spans residues Leu-207–Tyr-210.

Belongs to the Casparian strip membrane proteins (CASP) family. As to quaternary structure, homodimer and heterodimers.

It localises to the cell membrane. This Vitis vinifera (Grape) protein is CASP-like protein 3A1.